A 225-amino-acid polypeptide reads, in one-letter code: Heptaprenylglyceryl phosphate synthase (225 aa).

Residue Lys-6 coordinates sn-glycerol 1-phosphate. Residues Asp-8 and Thr-34 each coordinate Mg(2+). Residues 153 to 158, Gly-183, and 203 to 204 contribute to the sn-glycerol 1-phosphate site; these read YVEYSG and GN.

It belongs to the GGGP/HepGP synthase family. Group I subfamily. As to quaternary structure, homodimer. Mg(2+) serves as cofactor.

It catalyses the reaction sn-glycerol 1-phosphate + all-trans-heptaprenyl diphosphate = 3-heptaprenyl-sn-glycero-1-phosphate + diphosphate. Its pathway is membrane lipid metabolism; glycerophospholipid metabolism. Its function is as follows. Prenyltransferase that catalyzes in vivo the transfer of the heptaprenyl moiety of heptaprenyl pyrophosphate (HepPP; 35 carbon atoms) to the C3 hydroxyl of sn-glycerol-1-phosphate (G1P), producing heptaprenylglyceryl phosphate (HepGP). This reaction is an ether-bond-formation step in the biosynthesis of archaea-type G1P-based membrane lipids found in Bacillales. The protein is Heptaprenylglyceryl phosphate synthase of Listeria monocytogenes serotype 4b (strain CLIP80459).